The chain runs to 229 residues: Apoptosis regulator Bcl-2 (229 aa).

Residues 10-30 carry the BH4 motif; that stretch reads DNREIVMKYIHYKLSQRGYEW. Residues 30 to 82 form a disordered region; sequence WDAGDAGAAPPGAAPAPGILSSQPGRTPAPSRTSPPPPPAAAAGPAPSPVPPV. Over residues 33–61 the composition is skewed to low complexity; sequence GDAGAAPPGAAPAPGILSSQPGRTPAPSR. Position 62 is a phosphothreonine; by MAPK8 (threonine 62). The segment covering 62–81 has biased composition (pro residues); it reads TSPPPPPAAAAGPAPSPVPP. At serine 63 the chain carries Phosphoserine; by MAPK8 and PKC. Position 77 is a phosphoserine; by MAPK8 (serine 77). Residues 83–97 carry the BH3 motif; sequence VHLTLRQAGDDFSRR. Residues 126-145 carry the BH1 motif; sequence ELFRDGVNWGRIVAFFEFGG. A BH2 motif is present at residues 177-192; sequence TWIQDNGGWDAFVELY. The chain crosses the membrane as a helical span at residues 202-223; it reads FSWLSLKALLSLALVGACITLG.

Belongs to the Bcl-2 family. In terms of assembly, forms homodimers, and heterodimers with BAX, BAD, BAK and Bcl-X(L). Heterodimerization with BAX requires intact BH1 and BH2 motifs, and is necessary for anti-apoptotic activity. Component of the complex, at least composed of LRPPRC, BECN1 and BCL2; the interactions prevent BECN1 from forming an autophagy-inducing complex with PIK3C3. Interacts with EI24. Also interacts with APAF1, BBC3, BCL2L1, BNIPL, MRPL41 and TP53BP2. Binding to FKBP8 seems to target BCL2 to the mitochondria and probably interferes with the binding of BCL2 to its targets. Interacts with BAG1 in an ATP-dependent manner. Interacts with RAF1 (the 'Ser-338' and 'Ser-339' phosphorylated form). Interacts (via the BH4 domain) with EGLN3; the interaction prevents the formation of the BAX-BCL2 complex and inhibits the anti-apoptotic activity of BCL2. Interacts with G0S2; this interaction also prevents the formation of the anti-apoptotic BAX-BCL2 complex. Interacts with RTL10/BOP. Interacts with the SCF(FBXO10) complex. Interacts (via the loop between motifs BH4 and BH3) with NLRP1 (via LRR repeats), but not with NLRP2, NLRP3, NLRP4, PYCARD, nor MEFV. Interacts with GIMAP3/IAN4, GIMAP4/IAN1 and GIMAP5/IAN5. Interacts with BCAP31. Interacts with IRF3; the interaction is inhibited by Sendai virus infection. Interacts with BECN1; thereby inhibiting autophagy in non-starvation conditions. Interacts with AMBRA1; thereby inhibiting autophagy. Phosphorylation/dephosphorylation on Ser-63 regulates anti-apoptotic activity. Growth factor-stimulated phosphorylation on Ser-63 by PKC is required for the anti-apoptosis activity and occurs during the G2/M phase of the cell cycle. In the absence of growth factors, BCL2 appears to be phosphorylated by other protein kinases such as ERKs and stress-activated kinases. Phosphorylated by MAPK8/JNK1 at Thr-62, Ser-63 and Ser-77, which stimulates starvation-induced autophagy. Dephosphorylated by protein phosphatase 2A (PP2A). Post-translationally, proteolytically cleaved by caspases during apoptosis. The cleaved protein, lacking the BH4 motif, has pro-apoptotic activity, causes the release of cytochrome c into the cytosol promoting further caspase activity. In terms of processing, monoubiquitinated by PRKN, leading to an increase in its stability. Ubiquitinated by SCF(FBXO10), leading to its degradation by the proteasome.

Its subcellular location is the mitochondrion outer membrane. It localises to the nucleus membrane. The protein localises to the endoplasmic reticulum membrane. It is found in the cytoplasm. Suppresses apoptosis in a variety of cell systems including factor-dependent lymphohematopoietic and neural cells. Regulates cell death by controlling the mitochondrial membrane permeability. Appears to function in a feedback loop system with caspases. Inhibits caspase activity either by preventing the release of cytochrome c from the mitochondria and/or by binding to the apoptosis-activating factor (APAF-1). Also acts as an inhibitor of autophagy: interacts with BECN1 and AMBRA1 during non-starvation conditions and inhibits their autophagy function. May attenuate inflammation by impairing NLRP1-inflammasome activation, hence CASP1 activation and IL1B release. In Bos taurus (Bovine), this protein is Apoptosis regulator Bcl-2 (BCL2).